Here is a 207-residue protein sequence, read N- to C-terminus: Guanylate kinase (207 aa).

Residues 17 to 197 (GRLVVLAGPS…SCDELVSLLV (181 aa)) enclose the Guanylate kinase-like domain. An ATP-binding site is contributed by 24-31 (GPSAVGKS).

The protein belongs to the guanylate kinase family.

Its subcellular location is the cytoplasm. The enzyme catalyses GMP + ATP = GDP + ADP. Functionally, essential for recycling GMP and indirectly, cGMP. The protein is Guanylate kinase of Rhodococcus jostii (strain RHA1).